Reading from the N-terminus, the 122-residue chain is Large ribosomal subunit protein uL22 (122 aa).

Residues 102 to 122 (VAEGKEMKSSKSHKKNQAEGK) are disordered.

It belongs to the universal ribosomal protein uL22 family. In terms of assembly, part of the 50S ribosomal subunit.

Functionally, this protein binds specifically to 23S rRNA; its binding is stimulated by other ribosomal proteins, e.g. L4, L17, and L20. It is important during the early stages of 50S assembly. It makes multiple contacts with different domains of the 23S rRNA in the assembled 50S subunit and ribosome. The globular domain of the protein is located near the polypeptide exit tunnel on the outside of the subunit, while an extended beta-hairpin is found that lines the wall of the exit tunnel in the center of the 70S ribosome. In Helicobacter pylori (strain HPAG1), this protein is Large ribosomal subunit protein uL22.